The following is a 431-amino-acid chain: Histidinol dehydrogenase (431 aa).

NAD(+)-binding residues include Y127, Q189, and N212. Substrate-binding residues include S237, Q259, and H262. Zn(2+)-binding residues include Q259 and H262. Residues E326 and H327 each act as proton acceptor in the active site. The substrate site is built by H327, D360, E414, and H419. D360 serves as a coordination point for Zn(2+). A Zn(2+)-binding site is contributed by H419.

The protein belongs to the histidinol dehydrogenase family. Zn(2+) serves as cofactor.

It carries out the reaction L-histidinol + 2 NAD(+) + H2O = L-histidine + 2 NADH + 3 H(+). Its pathway is amino-acid biosynthesis; L-histidine biosynthesis; L-histidine from 5-phospho-alpha-D-ribose 1-diphosphate: step 9/9. Functionally, catalyzes the sequential NAD-dependent oxidations of L-histidinol to L-histidinaldehyde and then to L-histidine. The polypeptide is Histidinol dehydrogenase (Xylella fastidiosa (strain 9a5c)).